The following is a 266-amino-acid chain: Phosphonates import ATP-binding protein PhnC (266 aa).

The region spanning 2-246 (IEIKNVSKTY…KFAEIYGRPI (245 aa)) is the ABC transporter domain. Position 35 to 42 (35 to 42 (GLSGAGKS)) interacts with ATP.

It belongs to the ABC transporter superfamily. Phosphonates importer (TC 3.A.1.9.1) family. The complex is composed of two ATP-binding proteins (PhnC), two transmembrane proteins (PhnE) and a solute-binding protein (PhnD).

It localises to the cell membrane. The enzyme catalyses phosphonate(out) + ATP + H2O = phosphonate(in) + ADP + phosphate + H(+). Functionally, part of the ABC transporter complex PhnCDE involved in phosphonates import. Responsible for energy coupling to the transport system. The polypeptide is Phosphonates import ATP-binding protein PhnC (Shouchella clausii (strain KSM-K16) (Alkalihalobacillus clausii)).